The sequence spans 51 residues: Micropeptide inhibiting actin cytoskeleton (51 aa).

The interval Met-1–Ser-22 is disordered.

As to quaternary structure, interacts with aquaporin AQP2.

Functionally, reduces filamentous actin fibers by interacting with aquaporin AQP2 which leads to inhibition of the expression of SEPTIN4 and integrin ITGB4. Also inhibits the activation of the EREG/EGFR signaling pathway through interaction with AQP2. This Homo sapiens (Human) protein is Micropeptide inhibiting actin cytoskeleton.